A 2314-amino-acid chain; its full sequence is A-kinase anchor protein 6 (2314 aa).

Polar residues predominate over residues 1 to 12; it reads MLTMSVTLSPLR. Disordered regions lie at residues 1-25, 285-432, 505-613, and 736-755; these read MLTMSVTLSPLRSQGPDPMATDASP, PSSC…DPPD, SLCR…PCHA, and TDEKSERPSSSEKNESHSAT. A compositionally biased stretch (basic and acidic residues) spans 301–311; sequence SDDHKGEHGED. The span at 319 to 330 shows a compositional bias: polar residues; the sequence is QLDSTVGMSSLD. The span at 398–420 shows a compositional bias: basic and acidic residues; that stretch reads ETQKNERKGSDRKGQVVDLKPEL. Over residues 569–592 the composition is skewed to low complexity; it reads SKASSSPPCSHSSESSLGSDSIKS. Basic and acidic residues predominate over residues 736–753; sequence TDEKSERPSSSEKNESHS. Spectrin repeat units follow at residues 768–847 and 1033–1148; these read QHQE…QLLE and ILEK…LLDD. A Phosphoserine modification is found at Ser-1072. The interval 1349–1401 is disordered; sequence CHSGDLSQNSGSESGIVSEGDNEMPTNSDMSLFSMVDGSPSNPETEHPDPQMG. The segment covering 1353-1363 has biased composition (polar residues); it reads DLSQNSGSESG. A phosphoserine mark is found at Ser-1568 and Ser-1593. Composition is skewed to basic and acidic residues over residues 1816-1831 and 1874-1891; these read RSGVTDEIKVNKDGGG and GENKKSTYDVSKDPHVAD. Disordered stretches follow at residues 1816–1838, 1854–1926, and 1940–2012; these read RSGVTDEIKVNKDGGGNEKANPS, LSEN…KTIS, and SEDS…SGAR. Over residues 1917–1926 the composition is skewed to polar residues; the sequence is NLASNVKTIS. The span at 1944–1958 shows a compositional bias: basic and acidic residues; the sequence is SVARKEFCPPNDRHP. The segment at 2062–2075 is PKA-RII subunit binding domain; the sequence is IIDMASTALKSKSQ. The tract at residues 2166–2286 is disordered; sequence EEAGLPGALP…NAKQPKGKVA (121 aa). Residues 2215–2226 are compositionally biased toward basic and acidic residues; it reads GADDAKEGDDVS. Residues 2227–2243 are compositionally biased toward polar residues; the sequence is HTSQGCAESTEPTTPSG.

In terms of assembly, interacts with RII subunit of PKA, phosphatase 2B (calcineurin) and AKAP79. Interacts with SYNPO2.

The protein resides in the sarcoplasmic reticulum. Its subcellular location is the nucleus membrane. Binds to type II regulatory subunits of protein kinase A and anchors/targets them to the nuclear membrane or sarcoplasmic reticulum. May act as an adapter for assembling multiprotein complexes. The polypeptide is A-kinase anchor protein 6 (Akap6) (Rattus norvegicus (Rat)).